The following is a 434-amino-acid chain: Evolutionarily conserved signaling intermediate in Toll pathway, mitochondrial (434 aa).

A mitochondrion-targeting transit peptide spans 1–48 (MSWVQVNLLARGLSRGWGSICRTVLSGTPFAQPSLQARGLHCSAVTHK). Lys-371 participates in a covalent cross-link: Glycyl lysine isopeptide (Lys-Gly) (interchain with G-Cter in ubiquitin). The disordered stretch occupies residues 403–434 (TRLEGQSPPHSPPKGPEEDDEAIQAQQRQGQS).

The protein belongs to the ECSIT family. As to quaternary structure, interacts with MAP3K1, SMAD4 and TRAF6. Interacts with SMAD1 only after BMP4-treatment. Part of the mitochondrial complex I assembly/MCIA complex that comprises at least the core subunits TMEM126B, NDUFAF1, ECSIT and ACAD9 and complement subunits such as COA1 and TMEM186. Interacts with NDUFAF1. Interacts with ACAD9. Interacts with TRIM59. Interacts with TMEM70 and TMEM242. Interacts (when ubiquitinated) with NF-kappa-B subunits RELA and NFKB1. Interacts with RIGI, IFIT1 and MAVS; these interactions promote RLR-mediated type I IFN induction. Interacts with SQSTM1; this interaction inhibits TLR4 signaling via functional regulation of the TRAF6-ECSIT complex. Interacts with cereblon/CRBN; this interaction inhibits the ubiquitination of ECSIT. Post-translationally, ubiquitinated on Lys-371; leading to translocation in the nucleus together with RELA and NFKB1 and expression of NF-kappa-B-dependent genes.

It localises to the cytoplasm. It is found in the nucleus. The protein localises to the mitochondrion. Adapter protein that plays a role in different signaling pathways including TLRs and IL-1 pathways or innate antiviral induction signaling. Plays a role in the activation of NF-kappa-B by forming a signal complex with TRAF6 and TAK1/MAP3K7 to activate TAK1/MAP3K7 leading to activation of IKKs. Once ubiquitinated, interacts with the dissociated RELA and NFKB1 proteins and translocates to the nucleus where it induces NF-kappa-B-dependent gene expression. Plays a role in innate antiviral immune response by bridging the pattern recognition receptors RIGI and MDA5/IFIT1 to the MAVS complex at the mitochondrion. Promotes proteolytic activation of MAP3K1. Involved in the BMP signaling pathway. Required for normal embryonic development. Functionally, as part of the MCIA complex, involved in the assembly of the mitochondrial complex I. This Rattus norvegicus (Rat) protein is Evolutionarily conserved signaling intermediate in Toll pathway, mitochondrial.